The chain runs to 258 residues: UPF0246 protein VV0659 (258 aa).

Belongs to the UPF0246 family.

The polypeptide is UPF0246 protein VV0659 (Vibrio vulnificus (strain YJ016)).